The chain runs to 511 residues: Dihydrolipoyl dehydrogenase, mitochondrial (511 aa).

Residues 75-84, lysine 93, glycine 157, and 187-189 contribute to the FAD site; these read EKRGTLGGTC and TGS. A disulfide bridge links cysteine 84 with cysteine 89. NAD(+) contacts are provided by residues 224-231, glutamate 247, leucine 281, and glycine 316; that span reads GGGIIGLE. Residues aspartate 357 and 363-366 contribute to the FAD site; that span reads MLAH. The active-site Proton acceptor is histidine 489.

This sequence belongs to the class-I pyridine nucleotide-disulfide oxidoreductase family. As to quaternary structure, homodimer. Requires FAD as cofactor.

It localises to the mitochondrion matrix. It catalyses the reaction N(6)-[(R)-dihydrolipoyl]-L-lysyl-[protein] + NAD(+) = N(6)-[(R)-lipoyl]-L-lysyl-[protein] + NADH + H(+). In terms of biological role, lipoamide dehydrogenase is a component of the alpha-ketoacid dehydrogenase complexes. Malfunction of this protein blocks the progression of cell cycle from G1 to S phase. This Schizosaccharomyces pombe (strain 972 / ATCC 24843) (Fission yeast) protein is Dihydrolipoyl dehydrogenase, mitochondrial (dld1).